The sequence spans 299 residues: UDP-3-O-acyl-N-acetylglucosamine deacetylase (299 aa).

Zn(2+)-binding residues include His75, His232, and Asp236. His259 (proton donor) is an active-site residue.

Belongs to the LpxC family. Zn(2+) is required as a cofactor.

It catalyses the reaction a UDP-3-O-[(3R)-3-hydroxyacyl]-N-acetyl-alpha-D-glucosamine + H2O = a UDP-3-O-[(3R)-3-hydroxyacyl]-alpha-D-glucosamine + acetate. The protein operates within glycolipid biosynthesis; lipid IV(A) biosynthesis; lipid IV(A) from (3R)-3-hydroxytetradecanoyl-[acyl-carrier-protein] and UDP-N-acetyl-alpha-D-glucosamine: step 2/6. Functionally, catalyzes the hydrolysis of UDP-3-O-myristoyl-N-acetylglucosamine to form UDP-3-O-myristoylglucosamine and acetate, the committed step in lipid A biosynthesis. This is UDP-3-O-acyl-N-acetylglucosamine deacetylase from Helicobacter hepaticus (strain ATCC 51449 / 3B1).